Consider the following 120-residue polypeptide: C-C motif chemokine 23 (120 aa).

Residues 1 to 21 (MKVSVAALSCLMLVTALGSQA) form the signal peptide. 3 cysteine pairs are disulfide-bonded: Cys54–Cys78, Cys55–Cys94, and Cys65–Cys105.

The protein belongs to the intercrine beta (chemokine CC) family.

It localises to the secreted. Its function is as follows. Shows chemotactic activity for monocytes, resting T-lymphocytes, and neutrophils, but not for activated lymphocytes. Inhibits proliferation of myeloid progenitor cells in colony formation assays. This protein can bind heparin. Binds CCR1. This is C-C motif chemokine 23 (CCL23) from Macaca mulatta (Rhesus macaque).